The sequence spans 501 residues: MLLQNFSNTIFLLCLFFTLLSATKPLNLTLPHQHPSPDSVALHVIRSVNESLARRQLSSPSSSSSSSSSSSSSSCRTGNPIDDCWRCSDADWSTNRQRLADCSIGFGHGTLGGKNGKIYVVTDSSDNNPTNPTPGTLRYGVIQEEPLWIVFSSNMLIRLKQELIINSYKTLDGRGSAVHITGNGCLTLQYVQHIIIHNLHIYDCKPSAGFEKRGRSDGDGISIFGSQKIWVDHCSMSHCTDGLIDAVMGSTAITISNNYFTHHDEVMLLGHDDNYAPDTGMQVTIAFNHFGQGLVQRMPRCRRGYIHVVNNDFTEWKMYAIGGSGNPTINSQGNRYSAPSDPSAKEVTKRVDSKDDGEWSNWNWRTEGDLMENGAFFVASGEGMSSMYSKASSVDPKAASLVDQLTRNAGVFGGPRDDQGQSGNSYSPYGGDGGGGGSSGGSSGGGMDVMGGTTRGSSSSSGDDSNVFQMIFGSDAPSRPRLTLLFSLLMISVLSLSTLLL.

Residues 1–22 (MLLQNFSNTIFLLCLFFTLLSA) form the signal peptide. Asn27 and Asn49 each carry an N-linked (GlcNAc...) asparagine glycan. Positions 55–78 (RQLSSPSSSSSSSSSSSSSSCRTG) are disordered. Low complexity predominate over residues 58 to 74 (SSPSSSSSSSSSSSSSS). The Ca(2+) site is built by Asp217, Asp241, and Asp245. The active site involves Arg297. Disordered stretches follow at residues 329 to 359 (INSQ…DGEW) and 408 to 463 (NAGV…SSGD). The span at 343–357 (SAKEVTKRVDSKDDG) shows a compositional bias: basic and acidic residues. Residues 430 to 449 (GGDGGGGGSSGGSSGGGMDV) show a composition bias toward gly residues. Residues 450-463 (MGGTTRGSSSSSGD) are compositionally biased toward low complexity. A lipid anchor (GPI-anchor amidated serine) is attached at Ser474. Positions 475-501 (DAPSRPRLTLLFSLLMISVLSLSTLLL) are cleaved as a propeptide — removed in mature form.

It belongs to the polysaccharide lyase 1 family. It depends on Ca(2+) as a cofactor. In terms of tissue distribution, expressed equally in mature leaves, buds, flowers, rosettes and roots.

It is found in the cell membrane. The catalysed reaction is Eliminative cleavage of (1-&gt;4)-alpha-D-galacturonan to give oligosaccharides with 4-deoxy-alpha-D-galact-4-enuronosyl groups at their non-reducing ends.. Its pathway is glycan metabolism; pectin degradation; 2-dehydro-3-deoxy-D-gluconate from pectin: step 2/5. Functionally, susceptibility factor required for infection by most powdery mildews, but not by unrelated pathogens. Exact function not known, but clearly affects cell wall composition. This is Probable pectate lyase 13 (PMR6) from Arabidopsis thaliana (Mouse-ear cress).